The sequence spans 234 residues: Peroxiredoxin-2E, chloroplastic (234 aa).

A chloroplast-targeting transit peptide spans 1–70; sequence MATSLSVSRF…TRSFATTPVT (70 aa). The region spanning 73-234 is the Thioredoxin domain; sequence ISVGDKLPDS…SSAEDMLKAL (162 aa). Ser82 carries the phosphoserine modification. The Cysteine sulfenic acid (-SOH) intermediate role is filled by Cys121.

The protein belongs to the peroxiredoxin family. Prx5 subfamily. As to quaternary structure, monomer. Expressed in all tissues but predominantly in buds, siliques and seeds.

It is found in the plastid. It localises to the chloroplast stroma. It carries out the reaction [glutaredoxin]-dithiol + a hydroperoxide = [glutaredoxin]-disulfide + an alcohol + H2O. Thiol-specific peroxidase that catalyzes the reduction of hydrogen peroxide and organic hydroperoxides to water and alcohols, respectively. Plays a role in cell protection against oxidative stress by detoxifying peroxides. May be involved in chloroplast redox homeostasis. This is Peroxiredoxin-2E, chloroplastic (PRXIIE) from Arabidopsis thaliana (Mouse-ear cress).